Reading from the N-terminus, the 129-residue chain is Phosphoribosyl-AMP cyclohydrolase (129 aa).

Asp-82 contributes to the Mg(2+) binding site. Cys-83 contributes to the Zn(2+) binding site. Residues Asp-84 and Asp-86 each contribute to the Mg(2+) site. Positions 99 and 106 each coordinate Zn(2+).

Belongs to the PRA-CH family. Homodimer. Requires Mg(2+) as cofactor. It depends on Zn(2+) as a cofactor.

The protein localises to the cytoplasm. It catalyses the reaction 1-(5-phospho-beta-D-ribosyl)-5'-AMP + H2O = 1-(5-phospho-beta-D-ribosyl)-5-[(5-phospho-beta-D-ribosylamino)methylideneamino]imidazole-4-carboxamide. The protein operates within amino-acid biosynthesis; L-histidine biosynthesis; L-histidine from 5-phospho-alpha-D-ribose 1-diphosphate: step 3/9. Catalyzes the hydrolysis of the adenine ring of phosphoribosyl-AMP. This chain is Phosphoribosyl-AMP cyclohydrolase, found in Methanosarcina barkeri (strain Fusaro / DSM 804).